A 1010-amino-acid chain; its full sequence is Regulator of telomere elongation helicase 1 homolog (1010 aa).

The region spanning 7–333 (NGITVNFPFE…KEMLLQLEKT (327 aa)) is the Helicase ATP-binding domain. Position 42–49 (42–49 (SPTGTGKT)) interacts with ATP. Residues cysteine 157, cysteine 175, cysteine 184, and cysteine 220 each coordinate [4Fe-4S] cluster. Residues 263 to 266 (DEAH) carry the DEAH box motif. The interval 912-931 (TSDDEDPGRTGDDPTRQAPE) is disordered. The segment covering 918–931 (PGRTGDDPTRQAPE) has biased composition (basic and acidic residues).

It belongs to the helicase family. RAD3/XPD subfamily.

Its subcellular location is the nucleus. The enzyme catalyses ATP + H2O = ADP + phosphate + H(+). Functionally, a probable ATP-dependent DNA helicase implicated in DNA repair and the maintenance of genomic stability. Acts as an anti-recombinase to counteract toxic recombination and limit crossover during meiosis. Regulates meiotic recombination and crossover homeostasis by physically dissociating strand invasion events and thereby promotes noncrossover repair by meiotic synthesis dependent strand annealing (SDSA) as well as disassembly of D loop recombination intermediates. The polypeptide is Regulator of telomere elongation helicase 1 homolog (Aedes aegypti (Yellowfever mosquito)).